The sequence spans 223 residues: Protein-disulfide oxidoreductase DsbI (223 aa).

The chain crosses the membrane as a helical span at residues 26–46 (LLWLLMAVAMGALIILAHSFF). Cysteines 55 and 58 form a disulfide. The next 2 helical transmembrane spans lie at 59–78 (VYIRYAMFVMVIGGLVAAIN) and 82–102 (IILKLIGCVMAFYGSILGLKF). Cysteine 127 and cysteine 153 are disulfide-bonded. A helical membrane pass occupies residues 198–218 (CMLAFGMCLVLLVIMSGAWAL).

It belongs to the DsbB family. DsbI subfamily. In terms of assembly, interacts with DsbL.

The protein resides in the cell inner membrane. Functionally, required for disulfide bond formation in some proteins. Part of a redox system composed of DsbI and DsbL that mediates formation of an essential disulfide bond in AssT. This Escherichia coli O1:K1 / APEC protein is Protein-disulfide oxidoreductase DsbI.